The sequence spans 573 residues: Delta 8-(E)-sphingolipid desaturase (573 aa).

One can recognise a Cytochrome b5 heme-binding domain in the interval 2 to 77 (SRVLSRRDIA…FKIWKIGRID (76 aa)). Residues H37 and H60 each contribute to the heme site. The chain crosses the membrane as a helical span at residues 228 to 248 (LFGISFYLLSLKWFAISAICL). Residues 260–264 (HDAGH) carry the Histidine box-1 motif. The helical transmembrane segment at 273-293 (VDNIIGMTVASWIGGLSLGWW) threads the bilayer. The Histidine box-2 motif lies at 297-301 (HNVHH). 3 helical membrane-spanning segments follow: residues 353-372 (YLYY…LSWM), 393-413 (LAGL…KQMP), and 422-442 (VMIS…SHFA). Positions 481 to 485 (QVIHH) match the Histidine box-3 motif.

It belongs to the fatty acid desaturase type 1 family.

The protein localises to the membrane. It catalyses the reaction an N-acylsphing-4-enine + 2 Fe(II)-[cytochrome b5] + O2 + 2 H(+) = a (4E,8E)-4-sphinga-4,8-dienine ceramide + 2 Fe(III)-[cytochrome b5] + 2 H2O. It functions in the pathway lipid metabolism; sphingolipid metabolism. In terms of biological role, delta(8)-fatty-acid desaturase which introduces a double bond at the 8-position in the long-chain base (LCB) of ceramides. Required for the formation of the di-unsaturated sphingoid base (E,E)-sphinga-4,8-dienine during glucosylceramide (GluCer) biosynthesis. The chain is Delta 8-(E)-sphingolipid desaturase from Kluyveromyces lactis (strain ATCC 8585 / CBS 2359 / DSM 70799 / NBRC 1267 / NRRL Y-1140 / WM37) (Yeast).